A 417-amino-acid chain; its full sequence is NADH-quinone oxidoreductase subunit D (417 aa).

It belongs to the complex I 49 kDa subunit family. In terms of assembly, NDH-1 is composed of 14 different subunits. Subunits NuoB, C, D, E, F, and G constitute the peripheral sector of the complex.

The protein localises to the cell inner membrane. It carries out the reaction a quinone + NADH + 5 H(+)(in) = a quinol + NAD(+) + 4 H(+)(out). NDH-1 shuttles electrons from NADH, via FMN and iron-sulfur (Fe-S) centers, to quinones in the respiratory chain. The immediate electron acceptor for the enzyme in this species is believed to be ubiquinone. Couples the redox reaction to proton translocation (for every two electrons transferred, four hydrogen ions are translocated across the cytoplasmic membrane), and thus conserves the redox energy in a proton gradient. This is NADH-quinone oxidoreductase subunit D from Polaromonas sp. (strain JS666 / ATCC BAA-500).